The sequence spans 351 residues: Penicillolysin (351 aa).

The signal sequence occupies residues 1 to 19; the sequence is MRFTTLSTAFLALAQNVYA. The propeptide occupies 20 to 174; sequence FPIESDLSAL…TKALKPLDRR (155 aa). N-linked (GlcNAc...) asparagine glycans are attached at residues N52 and N181. H302 is a binding site for Zn(2+). Residue E303 is part of the active site. Residues H306 and D317 each contribute to the Zn(2+) site.

Belongs to the peptidase M35 family. Requires Zn(2+) as cofactor.

The catalysed reaction is Preferential cleavage of bonds with hydrophobic residues in P1'. Also 3-Asn-|-Gln-4 and 8-Gly-|-Ser-9 bonds in insulin B chain.. The protein is Penicillolysin (plnC) of Penicillium citrinum.